A 554-amino-acid polypeptide reads, in one-letter code: CTP synthase (554 aa).

The segment at 1–265 (MTPLIFVTGG…DEIVIDQFKL (265 aa)) is amidoligase domain. Serine 13 provides a ligand contact to CTP. Serine 13 contributes to the UTP binding site. ATP is bound by residues 14–19 (SLGKGI) and aspartate 71. Mg(2+)-binding residues include aspartate 71 and glutamate 139. CTP contacts are provided by residues 146–148 (DIE), 186–191 (KTKPTQ), and lysine 222. UTP-binding positions include 186-191 (KTKPTQ) and lysine 222. Residues 292–545 (TIAVVGKYVD…VKASRARKAG (254 aa)) form the Glutamine amidotransferase type-1 domain. Glycine 353 contacts L-glutamine. Cysteine 380 (nucleophile; for glutamine hydrolysis) is an active-site residue. Residues 381–384 (YGMQ), glutamate 404, and arginine 471 each bind L-glutamine. Catalysis depends on residues histidine 518 and glutamate 520.

It belongs to the CTP synthase family. Homotetramer.

The catalysed reaction is UTP + L-glutamine + ATP + H2O = CTP + L-glutamate + ADP + phosphate + 2 H(+). It carries out the reaction L-glutamine + H2O = L-glutamate + NH4(+). It catalyses the reaction UTP + NH4(+) + ATP = CTP + ADP + phosphate + 2 H(+). Its pathway is pyrimidine metabolism; CTP biosynthesis via de novo pathway; CTP from UDP: step 2/2. Its activity is regulated as follows. Allosterically activated by GTP, when glutamine is the substrate; GTP has no effect on the reaction when ammonia is the substrate. The allosteric effector GTP functions by stabilizing the protein conformation that binds the tetrahedral intermediate(s) formed during glutamine hydrolysis. Inhibited by the product CTP, via allosteric rather than competitive inhibition. Its function is as follows. Catalyzes the ATP-dependent amination of UTP to CTP with either L-glutamine or ammonia as the source of nitrogen. Regulates intracellular CTP levels through interactions with the four ribonucleotide triphosphates. The protein is CTP synthase of Xylella fastidiosa (strain M23).